Consider the following 460-residue polypeptide: Chromosomal replication initiator protein DnaA (460 aa).

Residues 1–91 (MNLTSPKVST…SLWQSEDKSI (91 aa)) form a domain I, interacts with DnaA modulators region. The domain II stretch occupies residues 91–122 (IRSIDIQVIEERNSNFNVILKNREESNHNLGS). Residues 123–342 (PLDPRFTFDN…GALNKVTHTS (220 aa)) form a domain III, AAA+ region region. ATP contacts are provided by Gly-169, Gly-171, Lys-172, and Thr-173. Positions 343-460 (LIGRSMTVES…EINRLKKMFK (118 aa)) are domain IV, binds dsDNA.

The protein belongs to the DnaA family. As to quaternary structure, oligomerizes as a right-handed, spiral filament on DNA at oriC.

The protein localises to the cytoplasm. Its function is as follows. Plays an essential role in the initiation and regulation of chromosomal replication. ATP-DnaA binds to the origin of replication (oriC) to initiate formation of the DNA replication initiation complex once per cell cycle. Binds the DnaA box (a 9 base pair repeat at the origin) and separates the double-stranded (ds)DNA. Forms a right-handed helical filament on oriC DNA; dsDNA binds to the exterior of the filament while single-stranded (ss)DNA is stabiized in the filament's interior. The ATP-DnaA-oriC complex binds and stabilizes one strand of the AT-rich DNA unwinding element (DUE), permitting loading of DNA polymerase. After initiation quickly degrades to an ADP-DnaA complex that is not apt for DNA replication. Binds acidic phospholipids. The protein is Chromosomal replication initiator protein DnaA of Wolbachia pipientis wMel.